We begin with the raw amino-acid sequence, 99 residues long: Acylphosphatase-1 (99 aa).

Ala-2 carries the post-translational modification N-acetylalanine. Residues 9 to 99 (SVDYEIFGKV…LDYSDFQIVK (91 aa)) enclose the Acylphosphatase-like domain. Catalysis depends on residues Arg-24 and Asn-42.

This sequence belongs to the acylphosphatase family.

The enzyme catalyses an acyl phosphate + H2O = a carboxylate + phosphate + H(+). The chain is Acylphosphatase-1 (Acyp1) from Mus musculus (Mouse).